A 277-amino-acid polypeptide reads, in one-letter code: Glutamate racemase (277 aa).

Substrate-binding positions include 13–14 (DS) and 45–46 (YG). Catalysis depends on cysteine 77, which acts as the Proton donor/acceptor. Position 78–79 (78–79 (NT)) interacts with substrate. Residue cysteine 192 is the Proton donor/acceptor of the active site. 193–194 (TH) contacts substrate.

Belongs to the aspartate/glutamate racemases family.

It carries out the reaction L-glutamate = D-glutamate. It participates in cell wall biogenesis; peptidoglycan biosynthesis. In terms of biological role, provides the (R)-glutamate required for cell wall biosynthesis. The protein is Glutamate racemase of Rhizobium meliloti (strain 1021) (Ensifer meliloti).